A 570-amino-acid chain; its full sequence is Sulfite reductase [NADPH] hemoprotein beta-component (570 aa).

Positions 434, 440, 479, and 483 each coordinate [4Fe-4S] cluster. Cys483 contributes to the siroheme binding site.

The protein belongs to the nitrite and sulfite reductase 4Fe-4S domain family. Alpha(8)-beta(8). The alpha component is a flavoprotein, the beta component is a hemoprotein. Requires siroheme as cofactor. [4Fe-4S] cluster serves as cofactor.

The catalysed reaction is hydrogen sulfide + 3 NADP(+) + 3 H2O = sulfite + 3 NADPH + 4 H(+). Its pathway is sulfur metabolism; hydrogen sulfide biosynthesis; hydrogen sulfide from sulfite (NADPH route): step 1/1. In terms of biological role, component of the sulfite reductase complex that catalyzes the 6-electron reduction of sulfite to sulfide. This is one of several activities required for the biosynthesis of L-cysteine from sulfate. In Shigella flexneri serotype 5b (strain 8401), this protein is Sulfite reductase [NADPH] hemoprotein beta-component.